A 134-amino-acid chain; its full sequence is Small ribosomal subunit protein uS11 (134 aa).

Disordered regions lie at residues 1-22 and 114-134; these read MPPKGRQGAAKKVRRKEKKNVA and SIQDVTPTPHNGCRPPKRRRV. Residues 9 to 22 show a composition bias toward basic residues; sequence AAKKVRRKEKKNVA.

The protein belongs to the universal ribosomal protein uS11 family. Part of the 30S ribosomal subunit. Interacts with proteins S7 and S18. Binds to IF-3.

Located on the platform of the 30S subunit, it bridges several disparate RNA helices of the 16S rRNA. Forms part of the Shine-Dalgarno cleft in the 70S ribosome. In Streptomyces coelicolor (strain ATCC BAA-471 / A3(2) / M145), this protein is Small ribosomal subunit protein uS11.